Reading from the N-terminus, the 969-residue chain is RNA polymerase-associated protein RapA (969 aa).

Residues 164-334 (EVGRRHAPRV…FARLRLLDSD (171 aa)) enclose the Helicase ATP-binding domain. Residue 177 to 184 (DEVGLGKT) participates in ATP binding. The short motif at 280 to 283 (DEAH) is the DEAH box element. The 177-residue stretch at 492–668 (RVNWLLEKLK…GSNEALNDVI (177 aa)) folds into the Helicase C-terminal domain.

The protein belongs to the SNF2/RAD54 helicase family. RapA subfamily. In terms of assembly, interacts with the RNAP. Has a higher affinity for the core RNAP than for the holoenzyme. Its ATPase activity is stimulated by binding to RNAP.

Functionally, transcription regulator that activates transcription by stimulating RNA polymerase (RNAP) recycling in case of stress conditions such as supercoiled DNA or high salt concentrations. Probably acts by releasing the RNAP, when it is trapped or immobilized on tightly supercoiled DNA. Does not activate transcription on linear DNA. Probably not involved in DNA repair. The sequence is that of RNA polymerase-associated protein RapA from Vibrio vulnificus (strain YJ016).